Consider the following 231-residue polypeptide: Lipoprotein-releasing system ATP-binding protein LolD (231 aa).

The region spanning 6–231 is the ABC transporter domain; that stretch reads LQVQAVSKSY…YLQAVAEHAQ (226 aa). Residue 42–49 participates in ATP binding; sequence GTSGSGKS.

It belongs to the ABC transporter superfamily. Lipoprotein translocase (TC 3.A.1.125) family. In terms of assembly, the complex is composed of two ATP-binding proteins (LolD) and two transmembrane proteins (LolC and LolE).

The protein resides in the cell inner membrane. In terms of biological role, part of the ABC transporter complex LolCDE involved in the translocation of mature outer membrane-directed lipoproteins, from the inner membrane to the periplasmic chaperone, LolA. Responsible for the formation of the LolA-lipoprotein complex in an ATP-dependent manner. The sequence is that of Lipoprotein-releasing system ATP-binding protein LolD from Shewanella sp. (strain MR-7).